The sequence spans 205 residues: uncharacterized protein (205 aa).

This is an uncharacterized protein from Orgyia pseudotsugata (Douglas-fir tussock moth).